A 282-amino-acid chain; its full sequence is F-actin-capping protein subunit beta (282 aa).

The segment at 73–103 is disordered; the sequence is SPWSNQFDPPLDEAGSGGVGAGGNEGAGEGA. The span at 87-101 shows a compositional bias: gly residues; the sequence is GSGGVGAGGNEGAGE.

Belongs to the F-actin-capping protein beta subunit family. As to quaternary structure, component of the F-actin capping complex, composed of a heterodimer of an alpha and a beta subunit.

Its subcellular location is the cytoplasm. The protein localises to the cytoskeleton. The protein resides in the actin patch. Its function is as follows. F-actin-capping proteins bind in a Ca(2+)-independent manner to the fast growing ends of actin filaments (barbed end) thereby blocking the exchange of subunits at these ends. Unlike other capping proteins (such as gelsolin and severin), these proteins do not sever actin filaments. The sequence is that of F-actin-capping protein subunit beta (CAP2) from Gibberella zeae (strain ATCC MYA-4620 / CBS 123657 / FGSC 9075 / NRRL 31084 / PH-1) (Wheat head blight fungus).